The primary structure comprises 282 residues: MAAAPQAPGRGSVRKTRPLPVKTSLNNPYSICWGVLDREDMHFILQTLEDRIQSLGLQKIEDRKRKKKQPPLKKQSGDTSSIDVDTGEDLKKEKPKGDAQASGWTPVDVRKQLAIGINEVTRALERNELLLALACKSAKPAIVTSHLVQLSVSRGVPACQVPRLSERLAPVLGLKCVLALGFKRNTTAFGEELRAILPRVPRLNVAWLQDALEDPRENLQTESLESQDEEILDTSFEDLSKPKRKLAEGQQPVVLQPLKIKKLIPNPNKIRKPPKSKRTASK.

2 disordered regions span residues 1–21 (MAAA…PLPV) and 61–103 (EDRK…QASG). A2 is subject to N-acetylalanine. Residue S12 is modified to Phosphoserine. Basic and acidic residues predominate over residues 88–97 (EDLKKEKPKG). Phosphoserine is present on residues S226 and S235. The segment at 262–282 (KLIPNPNKIRKPPKSKRTASK) is disordered. Residues 269–282 (KIRKPPKSKRTASK) are compositionally biased toward basic residues.

The protein belongs to the eukaryotic ribosomal protein eL8 family. Component of nuclear RNase P and RNase MRP ribonucleoproteins. RNase P consists of a catalytic RNA moiety and about 10 protein subunits; POP1, POP4, POP5, POP7, RPP14, RPP21, RPP25, RPP30, RPP38 and RPP40. Within the RNase P complex, POP1, POP7 and RPP25 form the 'finger' subcomplex, POP5, RPP14, RPP40 and homodimeric RPP30 form the 'palm' subcomplex, and RPP21, POP4 and RPP38 form the 'wrist' subcomplex. All subunits of the RNase P complex interact with the catalytic RNA. Several subunits of RNase P are also part of the RNase MRP complex. RNase MRP consists of a catalytic RNA moiety and about 8 protein subunits; POP1, POP7, RPP25, RPP30, RPP38, RPP40 and possibly also POP4 and POP5.

It localises to the nucleus. The protein localises to the nucleolus. Component of ribonuclease P, a ribonucleoprotein complex that generates mature tRNA molecules by cleaving their 5'-ends. Also a component of the MRP ribonuclease complex, which cleaves pre-rRNA sequences. In Bos taurus (Bovine), this protein is Ribonuclease P protein subunit p38 (RPP38).